Here is a 282-residue protein sequence, read N- to C-terminus: Kanosamine-6-phosphate phosphatase (282 aa).

Asp-25 functions as the Nucleophile in the catalytic mechanism. Positions 25 and 27 each coordinate Mg(2+). Phosphate is bound at residue Lys-209. Mg(2+)-binding residues include Asp-232 and Ser-233. Asn-235 contributes to the phosphate binding site.

Belongs to the HAD-like hydrolase superfamily. Cof family. In terms of assembly, homotetramer. The cofactor is Mg(2+).

It carries out the reaction D-kanosamine 6-phosphate + H2O = kanosamine + phosphate. The protein operates within antibiotic biosynthesis; kanosamine biosynthesis. Functionally, involved in the biosynthesis of kanosamine (3-amino-3-deoxy-D-glucose), which is known to have antibiotic and antifungal properties, and to be a precursor of the antibiotic neotrehalosadiamine (3,3'-diamino-3,3'-dideoxy-alpha,beta-trehalose (NTD)). Catalyzes the dephosphorylation of kanosamine 6-phosphate to yield kanosamine. There is a trace amount of activity using glucosamine-6-phosphate. The chain is Kanosamine-6-phosphate phosphatase (ntdB) from Bacillus subtilis (strain 168).